The sequence spans 124 residues: UPF0102 protein BL0935 (124 aa).

The protein belongs to the UPF0102 family.

This chain is UPF0102 protein BL0935, found in Bifidobacterium longum (strain NCC 2705).